The chain runs to 79 residues: Methionine-rich peptide X (79 aa).

The signal sequence occupies residues 1-22 (MKKLAAVMLTSCLMVAVGASFA). Positions 37–79 (KKDDMAKDEMKKDSMAKDGMKKDAMKKDAMMKKDGMTKDEMKK) are disordered.

Post-translationally, protein is oxidized (possibly on Met residues) when cells are exposed to chlorite or hypochlorite; initially the protein is highly oxidized, by 50 minutes all protein is in the reduced form.

The protein localises to the periplasm. Serves as an oxidative stress sink, specifically for chlorite and hypochlorite. The protein is Methionine-rich peptide X of Azospira oryzae (strain ATCC BAA-33 / DSM 13638 / PS) (Dechlorosoma suillum).